The following is a 101-amino-acid chain: Therostasin (101 aa).

An N-terminal signal peptide occupies residues 1–19 (MRGLAVLLLVACFCSVAFG). 2 Antistasin-like domains span residues 21 to 46 (CENT…TCLC) and 49 to 75 (CNDA…FCTC).

Salivary glands.

It is found in the secreted. In terms of biological role, potent inhibitor of factor Xa. It also inhibits trypsin in a weaker manner. The polypeptide is Therostasin (Theromyzon tessulatum (Duck leech)).